We begin with the raw amino-acid sequence, 200 residues long: TATA-box-binding protein 2 (200 aa).

2 tandem repeats follow at residues 25–101 (LQNI…ARIV) and 115–192 (IQNI…YPVL).

Belongs to the TBP family. As to quaternary structure, belongs to the TFIID complex together with the TBP-associated factors (TAFs). Binds DNA as monomer. Interacts with TAF1 (via N-terminus). Interacts with TFIIB1. Interacts with PTF2. Interacts with HAT5/ATHB-1 and ATHB-7. Component of a nuclear protein complex containing at least TATA binding proteins (TBPs, e.g. TBP1 and TBP2) and ATX1.

The protein localises to the nucleus. General transcription factor (GTF) that functions at the core of the DNA-binding multiprotein factor TFIID. Binding of TFIID to the TATA box is the initial transcriptional step of the pre-initiation complex (PIC), playing a role in the activation of eukaryotic genes transcribed by RNA polymerase II. Interacts with TFIIB1 and is required for activated transcription and possibly basal transcription. May act as GTF of RNA polymerase I-dependent transcription and rRNA synthesis. Forms a ternary complex with PBRP1 and the rDNA promoter region. This Arabidopsis thaliana (Mouse-ear cress) protein is TATA-box-binding protein 2.